Reading from the N-terminus, the 361-residue chain is Cyclin-dependent kinase 10 (361 aa).

One can recognise a Protein kinase domain in the interval 37-321 (FEKLNRIGEG…AGDCLESSYF (285 aa)). ATP contacts are provided by residues 43-51 (IGEGTYGIV) and Lys-66. Asp-161 acts as the Proton acceptor in catalysis. Thr-194 carries the post-translational modification Phosphothreonine. The segment at 332 to 361 (LMPTFPHHRNKRATPATSLGTESQSRRGRP) is disordered.

The protein belongs to the protein kinase superfamily. CMGC Ser/Thr protein kinase family. CDC2/CDKX subfamily. In terms of assembly, heterodimer with CCNQ, the interaction is required for kinase activity. Interacts with ETS2. Interacts with PRK2.

It is found in the cytoplasm. The protein resides in the cytoskeleton. It localises to the cilium basal body. The catalysed reaction is L-seryl-[protein] + ATP = O-phospho-L-seryl-[protein] + ADP + H(+). The enzyme catalyses L-threonyl-[protein] + ATP = O-phospho-L-threonyl-[protein] + ADP + H(+). Its function is as follows. Cyclin-dependent kinase that phosphorylates the transcription factor ETS2 (in vitro) and positively controls its proteasomal degradation (in cells). Involved in the regulation of actin cytoskeleton organization through the phosphorylation of actin dynamics regulators such as PKN2. Is a negative regulator of ciliogenesis through phosphorylation of PKN2 and promotion of RhoA signaling. The protein is Cyclin-dependent kinase 10 (CDK10) of Bos taurus (Bovine).